The chain runs to 208 residues: Large ribosomal subunit protein uL4 (208 aa).

Belongs to the universal ribosomal protein uL4 family. In terms of assembly, part of the 50S ribosomal subunit.

Functionally, one of the primary rRNA binding proteins, this protein initially binds near the 5'-end of the 23S rRNA. It is important during the early stages of 50S assembly. It makes multiple contacts with different domains of the 23S rRNA in the assembled 50S subunit and ribosome. Its function is as follows. Forms part of the polypeptide exit tunnel. This Anaplasma marginale (strain Florida) protein is Large ribosomal subunit protein uL4.